The chain runs to 182 residues: Isopentenyl-diphosphate Delta-isomerase (182 aa).

Residues H25 and H32 each contribute to the Mn(2+) site. A Nudix hydrolase domain is found at 30–164; sequence RLHLAFSSWL…PWAFSPWMVM (135 aa). C67 is an active-site residue. H69 lines the Mn(2+) pocket. E87 is a Mg(2+) binding site. Mn(2+) contacts are provided by E114 and E116. E116 is an active-site residue.

The protein belongs to the IPP isomerase type 1 family. In terms of assembly, homodimer. It depends on Mg(2+) as a cofactor. Requires Mn(2+) as cofactor.

The protein resides in the cytoplasm. The enzyme catalyses isopentenyl diphosphate = dimethylallyl diphosphate. It participates in isoprenoid biosynthesis; dimethylallyl diphosphate biosynthesis; dimethylallyl diphosphate from isopentenyl diphosphate: step 1/1. Functionally, catalyzes the 1,3-allylic rearrangement of the homoallylic substrate isopentenyl (IPP) to its highly electrophilic allylic isomer, dimethylallyl diphosphate (DMAPP). In Escherichia coli O139:H28 (strain E24377A / ETEC), this protein is Isopentenyl-diphosphate Delta-isomerase.